The chain runs to 588 residues: Proline--tRNA ligase (588 aa).

It belongs to the class-II aminoacyl-tRNA synthetase family. ProS type 1 subfamily. As to quaternary structure, homodimer.

Its subcellular location is the cytoplasm. The catalysed reaction is tRNA(Pro) + L-proline + ATP = L-prolyl-tRNA(Pro) + AMP + diphosphate. Catalyzes the attachment of proline to tRNA(Pro) in a two-step reaction: proline is first activated by ATP to form Pro-AMP and then transferred to the acceptor end of tRNA(Pro). As ProRS can inadvertently accommodate and process non-cognate amino acids such as alanine and cysteine, to avoid such errors it has two additional distinct editing activities against alanine. One activity is designated as 'pretransfer' editing and involves the tRNA(Pro)-independent hydrolysis of activated Ala-AMP. The other activity is designated 'posttransfer' editing and involves deacylation of mischarged Ala-tRNA(Pro). The misacylated Cys-tRNA(Pro) is not edited by ProRS. This is Proline--tRNA ligase from Corynebacterium efficiens (strain DSM 44549 / YS-314 / AJ 12310 / JCM 11189 / NBRC 100395).